A 482-amino-acid chain; its full sequence is Protein trichome birefringence-like 15 (482 aa).

Residues 109–129 (GSVSLSLIILILLVTTLLVSA) form a helical; Signal-anchor for type II membrane protein membrane-spanning segment. The short motif at 217–219 (GDS) is the GDS motif element. The DCXHWCLPGXXDXWN motif motif lies at 461–475 (DCLHWCLPGIPDTWN).

It belongs to the PC-esterase family. TBL subfamily.

The protein resides in the membrane. May act as a bridging protein that binds pectin and other cell wall polysaccharides. Probably involved in maintaining esterification of pectins. May be involved in the specific O-acetylation of cell wall polymers. The sequence is that of Protein trichome birefringence-like 15 (TBL15) from Arabidopsis thaliana (Mouse-ear cress).